The sequence spans 273 residues: Dermonecrotic toxin LruSicTox-alphaIC1a (273 aa).

His-5 is an active-site residue. Mg(2+) is bound by residues Glu-25 and Asp-27. Residue His-41 is the Nucleophile of the active site. Intrachain disulfides connect Cys-45–Cys-51 and Cys-47–Cys-190. Asp-85 contributes to the Mg(2+) binding site.

It belongs to the arthropod phospholipase D family. Class II subfamily. The cofactor is Mg(2+). In terms of tissue distribution, expressed by the venom gland.

Its subcellular location is the secreted. It catalyses the reaction an N-(acyl)-sphingosylphosphocholine = an N-(acyl)-sphingosyl-1,3-cyclic phosphate + choline. The enzyme catalyses an N-(acyl)-sphingosylphosphoethanolamine = an N-(acyl)-sphingosyl-1,3-cyclic phosphate + ethanolamine. It carries out the reaction a 1-acyl-sn-glycero-3-phosphocholine = a 1-acyl-sn-glycero-2,3-cyclic phosphate + choline. The catalysed reaction is a 1-acyl-sn-glycero-3-phosphoethanolamine = a 1-acyl-sn-glycero-2,3-cyclic phosphate + ethanolamine. In terms of biological role, dermonecrotic toxins cleave the phosphodiester linkage between the phosphate and headgroup of certain phospholipids (sphingolipid and lysolipid substrates), forming an alcohol (often choline) and a cyclic phosphate. This toxin acts on sphingomyelin (SM). It may also act on ceramide phosphoethanolamine (CPE), lysophosphatidylcholine (LPC) and lysophosphatidylethanolamine (LPE), but not on lysophosphatidylserine (LPS), and lysophosphatidylglycerol (LPG). It acts by transphosphatidylation, releasing exclusively cyclic phosphate products as second products. Induces dermonecrosis, hemolysis, increased vascular permeability, edema, inflammatory response, and platelet aggregation. In Loxosceles rufescens (Mediterranean recluse spider), this protein is Dermonecrotic toxin LruSicTox-alphaIC1a.